A 145-amino-acid chain; its full sequence is Large-conductance mechanosensitive channel (145 aa).

3 helical membrane passes run Val14–Leu34, Leu38–Pro58, and Gly81–Val101.

The protein belongs to the MscL family. As to quaternary structure, homopentamer.

Its subcellular location is the cell inner membrane. Channel that opens in response to stretch forces in the membrane lipid bilayer. May participate in the regulation of osmotic pressure changes within the cell. This chain is Large-conductance mechanosensitive channel, found in Rhizobium etli (strain CIAT 652).